A 329-amino-acid polypeptide reads, in one-letter code: DNA-directed RNA polymerase subunit alpha (329 aa).

Residues 1-231 form an alpha N-terminal domain (alpha-NTD) region; sequence MQTNLLKPKT…EQLAVFAQLE (231 aa). The alpha C-terminal domain (alpha-CTD) stretch occupies residues 249-329; it reads FDPILLRPVD…SWPPAGLDKR (81 aa).

Belongs to the RNA polymerase alpha chain family. As to quaternary structure, homodimer. The RNAP catalytic core consists of 2 alpha, 1 beta, 1 beta' and 1 omega subunit. When a sigma factor is associated with the core the holoenzyme is formed, which can initiate transcription.

It catalyses the reaction RNA(n) + a ribonucleoside 5'-triphosphate = RNA(n+1) + diphosphate. DNA-dependent RNA polymerase catalyzes the transcription of DNA into RNA using the four ribonucleoside triphosphates as substrates. The polypeptide is DNA-directed RNA polymerase subunit alpha (Polaromonas sp. (strain JS666 / ATCC BAA-500)).